A 313-amino-acid polypeptide reads, in one-letter code: 2-phosphoglycerate kinase (313 aa).

Residues 8–95 (SRILVKDKEY…LWRRVLKKHS (88 aa)) form the ATP-cone domain.

The protein belongs to the 2-phosphoglycerate kinase family. A divalent metal cation serves as cofactor.

It carries out the reaction (2R)-2-phosphoglycerate + ATP = (2R)-2,3-bisphosphoglycerate + ADP + H(+). The protein operates within thermoadapter biosynthesis; cyclic 2,3-diphosphoglycerate biosynthesis; cyclic 2,3-diphosphoglycerate from 2-phospho-D-glycerate: step 1/2. Catalyzes the phosphorylation of 2-phosphoglycerate to 2,3-diphosphoglycerate. Involved in the biosynthesis of cyclic 2,3-bisphosphoglycerate, a thermoprotectant. The sequence is that of 2-phosphoglycerate kinase from Methanococcus maripaludis (strain C5 / ATCC BAA-1333).